The primary structure comprises 727 residues: Glucans biosynthesis glucosyltransferase H (727 aa).

The tract at residues 18-38 (SAMPNERPGAMEPQNLSKMPE) is disordered. The next 7 membrane-spanning stretches (helical) occupy residues 58 to 78 (FLVV…MGAV), 97 to 117 (VNFC…LILL), 278 to 298 (LQQF…GWWV), 408 to 428 (IMAY…LMLA), 460 to 480 (LFYI…LLLL), 496 to 516 (IFSV…MMFI), and 572 to 592 (LLAW…ISAW).

The protein belongs to the glycosyltransferase 2 family. OpgH subfamily.

It is found in the cell inner membrane. It participates in glycan metabolism; osmoregulated periplasmic glucan (OPG) biosynthesis. In terms of biological role, involved in the biosynthesis of osmoregulated periplasmic glucans (OPGs). This is Glucans biosynthesis glucosyltransferase H from Shewanella baltica (strain OS185).